The following is a 278-amino-acid chain: Polyamine aminopropyltransferase (278 aa).

In terms of domain architecture, PABS spans 5–238; that stretch reads ELWFTEQQTP…GLWSFTMGSK (234 aa). An S-methyl-5'-thioadenosine-binding site is contributed by glutamine 34. Spermidine contacts are provided by histidine 65 and aspartate 89. S-methyl-5'-thioadenosine-binding positions include glutamate 109 and 140-141; that span reads DG. The Proton acceptor role is filled by aspartate 158. 158–161 provides a ligand contact to spermidine; sequence DSTD. Proline 165 is an S-methyl-5'-thioadenosine binding site.

It belongs to the spermidine/spermine synthase family. In terms of assembly, homodimer or homotetramer.

It is found in the cytoplasm. It catalyses the reaction S-adenosyl 3-(methylsulfanyl)propylamine + putrescine = S-methyl-5'-thioadenosine + spermidine + H(+). It functions in the pathway amine and polyamine biosynthesis; spermidine biosynthesis; spermidine from putrescine: step 1/1. Functionally, catalyzes the irreversible transfer of a propylamine group from the amino donor S-adenosylmethioninamine (decarboxy-AdoMet) to putrescine (1,4-diaminobutane) to yield spermidine. In Caldicellulosiruptor saccharolyticus (strain ATCC 43494 / DSM 8903 / Tp8T 6331), this protein is Polyamine aminopropyltransferase.